A 60-amino-acid chain; its full sequence is Small, acid-soluble spore protein C2 (60 aa).

It belongs to the alpha/beta-type SASP family. Post-translationally, SASP are degraded in the first minutes of spore germination and provide amino acids for both new protein synthesis and metabolism.

Functionally, SASP are bound to spore DNA. They are double-stranded DNA-binding proteins that cause DNA to change to an a-like conformation. They protect the DNA backbone from chemical and enzymatic cleavage and are thus involved in dormant spore's high resistance to UV light. The polypeptide is Small, acid-soluble spore protein C2 (sspC2) (Clostridium perfringens (strain 13 / Type A)).